Consider the following 417-residue polypeptide: GTP-binding protein YPT11 (417 aa).

Residues 1-34 (MSQRKRYSLNVVTSPSIPSPTPSAPIRTNESNWE) are disordered. Residues 97–104 (GDANVGKT), 228–232 (DTAGQ), and 292–295 (NKID) each bind GTP. S-geranylgeranyl cysteine attachment occurs at residues Cys-415 and Cys-416.

Belongs to the small GTPase superfamily. Rab family. Interacts with MYO2 (via C-terminal tail domain). Interacts with YIF1, YIP3, YIP4 and YIP5.

It localises to the endoplasmic reticulum membrane. The protein localises to the bud tip. Its subcellular location is the bud neck. Functionally, involved in the positive control of both endoplasmic reticulum (ER) and mitochondrion inheritance during cell divison. Required for the MYO2-dependent retention of newly inherited mitochondria at the bud tip in developing daughter cells. In Saccharomyces cerevisiae (strain AWRI1631) (Baker's yeast), this protein is GTP-binding protein YPT11 (YPT11).